The following is a 261-amino-acid chain: UPF0246 protein PMI0005 (261 aa).

The protein belongs to the UPF0246 family.

The sequence is that of UPF0246 protein PMI0005 from Proteus mirabilis (strain HI4320).